We begin with the raw amino-acid sequence, 225 residues long: Chlorosome protein J (225 aa).

Residues 1-95 form the 2Fe-2S ferredoxin-type domain; sequence MIIYINDKPC…TIRVLTRAEK (95 aa). Positions 33, 39, 42, and 77 each coordinate [2Fe-2S] cluster.

It depends on [2Fe-2S] cluster as a cofactor.

It is found in the chlorosome. In terms of biological role, could play a direct role in the oxidation or reduction of the quenching species formed in the chlorosome. The chain is Chlorosome protein J (csmJ) from Chlorobaculum tepidum (strain ATCC 49652 / DSM 12025 / NBRC 103806 / TLS) (Chlorobium tepidum).